We begin with the raw amino-acid sequence, 203 residues long: Akirin-2 (203 aa).

Phosphoserine occurs at positions 18 and 21. The Nuclear localization signal motif lies at 22–27; it reads PKRRRC. The residue at position 57 (serine 57) is a Phosphoserine. Residues 115-137 are disordered; it reads PHAFLLSGPASPGTPSGTSSPLK. A compositionally biased stretch (low complexity) spans 119–135; it reads LLSGPASPGTPSGTSSP. Residues 200–203 carry the SYVS motif motif; it reads SYVS.

The protein belongs to the akirin family. Homodimer. Interacts with IPO9; the interaction is direct. Associates with 20S and 26S proteasomes. Interacts with SMARCD1; promoting SWI/SNF complex recruitment. Interacts with NFKBIZ. Interacts with YWHAB. Post-translationally, polyubiquitinated. Polyubiquitination is dependent of UBR5 that extends pre-ubiquitinated AKIRIN2.

The protein localises to the nucleus. It is found in the cytoplasm. Its subcellular location is the membrane. Its function is as follows. Molecular adapter that acts as a bridge between a variety of multiprotein complexes, and which is involved in embryonic development, immunity, myogenesis and brain development. Plays a key role in nuclear protein degradation by promoting import of proteasomes into the nucleus: directly binds to fully assembled 20S proteasomes at one end and to nuclear import receptor IPO9 at the other end, bridging them together and mediating the import of pre-assembled proteasome complexes through the nuclear pore. Involved in innate immunity by regulating the production of interleukin-6 (IL6) downstream of Toll-like receptor (TLR): acts by bridging the NF-kappa-B inhibitor NFKBIZ and the SWI/SNF complex, leading to promote induction of IL6. Also involved in adaptive immunity by promoting B-cell activation. Involved in brain development: required for the survival and proliferation of cerebral cortical progenitor cells. Involved in myogenesis: required for skeletal muscle formation and skeletal development, possibly by regulating expression of muscle differentiation factors. In Bos taurus (Bovine), this protein is Akirin-2.